Consider the following 288-residue polypeptide: Aminoglycoside N(3)-acetyltransferase VII (288 aa).

The protein belongs to the antibiotic N-acetyltransferase family.

It catalyses the reaction a 2-deoxystreptamine antibiotic + acetyl-CoA = an N(3)-acetyl-2-deoxystreptamine antibiotic + CoA + H(+). Resistance to paromomycin. The polypeptide is Aminoglycoside N(3)-acetyltransferase VII (aacC7) (Streptomyces paromomycinus (Streptomyces rimosus subsp. paromomycinus)).